Consider the following 624-residue polypeptide: (-)-beta-phellandrene synthase 3, chloroplastic (624 aa).

A chloroplast-targeting transit peptide spans 1–48 (MAIVSSVPLASKSCLHKSLISSIHKLKPFCRTIPTLGMSRPGKYVMPS). Mg(2+)-binding residues include aspartate 375, aspartate 379, and aspartate 527. A DDXXD motif motif is present at residues 375–379 (DDMYD).

It belongs to the terpene synthase family. Tpsd subfamily. The cofactor is Mg(2+). Mn(2+) serves as cofactor.

Its subcellular location is the plastid. It is found in the chloroplast. The catalysed reaction is (2E)-geranyl diphosphate = (-)-beta-phellandrene + diphosphate. It participates in terpene metabolism; oleoresin biosynthesis. In terms of biological role, terpene synthase (TPS) involved in the biosynthesis of monoterpene natural products included in conifer oleoresin secretions and volatile emissions; these compounds contribute to biotic and abiotic stress defense against herbivores and pathogens. Catalyzes the conversion of (2E)-geranyl diphosphate (GPP) to (-)-beta-phellandrene. This chain is (-)-beta-phellandrene synthase 3, chloroplastic, found in Picea sitchensis (Sitka spruce).